We begin with the raw amino-acid sequence, 279 residues long: Toxin TxP-I (279 aa).

The signal sequence occupies residues 1–14 (MNLFFLFIIPTILA). Residues 15-27 (VKPFRSFNNISLI) constitute a propeptide that is removed on maturation.

In terms of processing, contains several disulfide bonds. In terms of tissue distribution, posterior glands which appear to be connected with the stylet through a series of ducts.

Its subcellular location is the secreted. In terms of biological role, part of a complex mixture of neurotoxins which P.tritici utilizes to capture prey. It has contracting-paralyzing activity in insects. The polypeptide is Toxin TxP-I (Pyemotes tritici (Straw itch mite)).